A 167-amino-acid chain; its full sequence is Bacterial non-heme ferritin (167 aa).

The Ferritin-like diiron domain occupies 2-145 (LNKELLDALN…THIDYLNRIG (144 aa)). Residues E17, E50, H53, E94, and Q127 each contribute to the Fe cation site.

This sequence belongs to the ferritin family. Prokaryotic subfamily.

The protein localises to the cytoplasm. It carries out the reaction 4 Fe(2+) + O2 + 6 H2O = 4 iron(III) oxide-hydroxide + 12 H(+). Iron-storage protein. The sequence is that of Bacterial non-heme ferritin (ftnA) from Staphylococcus saprophyticus subsp. saprophyticus (strain ATCC 15305 / DSM 20229 / NCIMB 8711 / NCTC 7292 / S-41).